Reading from the N-terminus, the 36-residue chain is U1-ectatotoxin-Et1b subunit B (36 aa).

Cysteines 11 and 33 form a disulfide.

The protein belongs to the ectatomin family. Ectatomin-Et subfamily. As to quaternary structure, heterodimer of subunits A and B; disulfide-linked. In terms of tissue distribution, expressed by the venom gland.

It is found in the secreted. It localises to the target cell membrane. In Ectatomma tuberculatum (Selva ant), this protein is U1-ectatotoxin-Et1b subunit B.